The following is a 426-amino-acid chain: Protein sum2 (426 aa).

A Sm domain is found at 1–80; that stretch reads MTEFIGSRIS…VKDLRIEEPA (80 aa). Disordered regions lie at residues 79 to 100, 204 to 305, and 348 to 426; these read PATT…IGSN, GMPS…AKPR, and SCES…ANDQ. Pro residues predominate over residues 84-93; sequence SAPPVQPPND. Polar residues predominate over residues 226–237; sequence VSASPSLQSMPP. A compositionally biased stretch (low complexity) spans 261 to 278; it reads RNSTVTNDRVVNTTVDVS. Over residues 279 to 298 the composition is skewed to polar residues; the sequence is QSQTVETSGPSKEVPTTQPD. Residues 296–332 enclose the DFDF domain; it reads QPDASAAKPRTEFDFQTANQKFQSMKDDLLKGKNDEE. Positions 335–351 match the FFD box motif; sequence EFYKPKQSFFDNISCES. Residues 350-371 show a composition bias toward basic and acidic residues; that stretch reads ESKEKGMEAADRRALRDRERSL. The short motif at 360–380 is the TFG box element; it reads DRRALRDRERSLNMETFGVAG. The span at 384-401 shows a compositional bias: basic residues; that stretch reads RGRRGRGRGRGGRGRGRG. Polar residues predominate over residues 405 to 426; the sequence is NQYNQYRNSNGSQPRAQPANDQ.

Its function is as follows. Required for G2/M phase checkpoint control. This Schizosaccharomyces pombe (strain 972 / ATCC 24843) (Fission yeast) protein is Protein sum2 (sum2).